An 880-amino-acid polypeptide reads, in one-letter code: MEGRRQRLLVFIFGALAITHLVQAQPPDQRGFISLDCGLPVNESPYTDPRTGLTFSSDADFILSGLRGEAGDDNTYIYRQYKDLRYFPDGIRNCYNLKVEQGINYLIRAGFGYGNYDGLNVYPKFDLHVGPNMWIAVDLEFGKDREIIYMTTSNLLQICLVKTGSTIPMISTLELRPLRNDSYLTQFGPLDLIYRRAYSSNSTGFIRYPDDIFDRKWDRYNEFETDVNTTLNVRSSSPFQVPEAVSRMGITPENASLPLRFYVSLDDDSDKVNVYFHFAEIQALRGNETREFDIELEEDIIQSAYSPTMLQSDTKYNLSPHKCSSGLCYLKLVRTPRSTLPPLISAIEAFKVVDFPYAETNPNDVAAMKDIEAFYGLKMISWQGDPCVPELLKWEDLKCSYTNKSTPPRIISLDLSSRGLKGVIAPAFQNLTELRKLDLSNNSFTGGVPEFLASMKSLSIINLNWNDLTGPLPKLLLDREKNGLKLTIQGNPKLCNDASCKNNNNQTYIVPVVASVASVLIIIAVLILILVFKKRRPTQVDSLPTVQHGLPNRPSIFTQTKRFTYSEVEALTDNFERVLGEGGFGVVYHGILNGTQPIAVKLLSQSSVQGYKEFKAEVELLLRVHHVNLVSLVGYCDEESNLALLYEYAPNGDLKQHLSGERGGSPLKWSSRLKIVVETAQGLEYLHTGCKPPMVHRDVKTTNILLDEHFQAKLADFGLSRSFPVGGETHVSTAVAGTPGYLDPEYYRTNRLNEKSDVYSFGIVLLEIITSRPVIQQTREKPHIAAWVGYMLTKGDIENVVDPRLNRDYEPTSVWKALEIAMSCVNPSSEKRPTMSQVTNELKQCLTLENSKRGVREDMGSRSSVEMSTSFTTEINPKAR.

A signal peptide spans 1 to 24 (MEGRRQRLLVFIFGALAITHLVQA). Topologically, residues 25-511 (QPPDQRGFIS…NNNNQTYIVP (487 aa)) are extracellular. Residues Asn180, Asn201, Asn228, Asn254, Asn287, Asn403, Asn430, and Asn441 are each glycosylated (N-linked (GlcNAc...) asparagine). 3 LRR repeats span residues 409 to 430 (RIIS…AFQN), 433 to 455 (ELRK…LASM), and 457 to 476 (SLSI…PKLL). Asn505 carries N-linked (GlcNAc...) asparagine glycosylation. A helical membrane pass occupies residues 512–532 (VVASVASVLIIIAVLILILVF). Residues 533 to 880 (KKRRPTQVDS…FTTEINPKAR (348 aa)) are Cytoplasmic-facing. Position 564 is a phosphothreonine (Thr564). One can recognise a Protein kinase domain in the interval 573 to 846 (DNFERVLGEG…QVTNELKQCL (274 aa)). ATP is bound by residues 579-587 (LGEGGFGVV) and Lys601. Tyr646 bears the Phosphotyrosine mark. Residue Asp698 is the Proton acceptor of the active site. A Phosphoserine modification is found at Ser732. Phosphothreonine is present on residues Thr733 and Thr738. At Tyr746 the chain carries Phosphotyrosine. The disordered stretch occupies residues 854–880 (GVREDMGSRSSVEMSTSFTTEINPKAR). Polar residues predominate over residues 861 to 880 (SRSSVEMSTSFTTEINPKAR).

This sequence belongs to the protein kinase superfamily. Ser/Thr protein kinase family.

It is found in the membrane. The catalysed reaction is L-seryl-[protein] + ATP = O-phospho-L-seryl-[protein] + ADP + H(+). It catalyses the reaction L-threonyl-[protein] + ATP = O-phospho-L-threonyl-[protein] + ADP + H(+). This Arabidopsis thaliana (Mouse-ear cress) protein is Probable LRR receptor-like serine/threonine-protein kinase At2g28960.